A 301-amino-acid polypeptide reads, in one-letter code: Probable alpha-L-glutamate ligase 1 (301 aa).

Residues L104–E287 form the ATP-grasp domain. Residues K141, E178–Y179, D187, and R211–N213 contribute to the ATP site. Residues D248, E260, and N262 each coordinate Mg(2+). D248, E260, and N262 together coordinate Mn(2+).

It belongs to the RimK family. Requires Mg(2+) as cofactor. Mn(2+) is required as a cofactor.

This is Probable alpha-L-glutamate ligase 1 from Shewanella frigidimarina (strain NCIMB 400).